Consider the following 575-residue polypeptide: Potassium-transporting ATPase potassium-binding subunit (575 aa).

12 consecutive transmembrane segments (helical) span residues 3-23 (FEGVLQIVATLVLMVAIVPFF), 69-89 (AVLASNAAMFVPVFAVLLLQG), 136-156 (CFQFLMFTSAATGLAVGIAFI), 178-198 (ILMPISIAFAVVLLSQGVPQS), 266-286 (LLEILLLLAVPTSLIYTFGVL), 293-313 (GWVLFGTIFVLFVGLVGVAAL), 340-360 (FGWAQSALFATATTGTMTGAV), 367-387 (LTPLAGLVTLFNLCLQVIWGG), 391-411 (GIAYILVFLIIAVFLTGLMVG), 431-451 (IIFLVHPVIILVPTAIALAIP), 498-518 (VVLLLGRYAPIVALLALAGGL), and 543-563 (AGTILILGALTFFPVFALGPI).

Belongs to the KdpA family. As to quaternary structure, the system is composed of three essential subunits: KdpA, KdpB and KdpC.

Its subcellular location is the cell inner membrane. Functionally, part of the high-affinity ATP-driven potassium transport (or Kdp) system, which catalyzes the hydrolysis of ATP coupled with the electrogenic transport of potassium into the cytoplasm. This subunit binds the periplasmic potassium ions and delivers the ions to the membrane domain of KdpB through an intramembrane tunnel. The polypeptide is Potassium-transporting ATPase potassium-binding subunit (Gloeobacter violaceus (strain ATCC 29082 / PCC 7421)).